The chain runs to 256 residues: Triosephosphate isomerase (256 aa).

9 to 11 contacts substrate; sequence NWK. Catalysis depends on His97, which acts as the Electrophile. The Proton acceptor role is filled by Glu169. Substrate is bound by residues Gly175, Ser214, and 235 to 236; that span reads GG.

The protein belongs to the triosephosphate isomerase family. In terms of assembly, homodimer.

It localises to the cytoplasm. The catalysed reaction is D-glyceraldehyde 3-phosphate = dihydroxyacetone phosphate. It participates in carbohydrate biosynthesis; gluconeogenesis. Its pathway is carbohydrate degradation; glycolysis; D-glyceraldehyde 3-phosphate from glycerone phosphate: step 1/1. Its function is as follows. Involved in the gluconeogenesis. Catalyzes stereospecifically the conversion of dihydroxyacetone phosphate (DHAP) to D-glyceraldehyde-3-phosphate (G3P). This Aliivibrio fischeri (strain ATCC 700601 / ES114) (Vibrio fischeri) protein is Triosephosphate isomerase.